The sequence spans 307 residues: Pantothenate kinase (307 aa).

90 to 97 (GSVAVGKS) is an ATP binding site.

This sequence belongs to the prokaryotic pantothenate kinase family.

Its subcellular location is the cytoplasm. It carries out the reaction (R)-pantothenate + ATP = (R)-4'-phosphopantothenate + ADP + H(+). Its pathway is cofactor biosynthesis; coenzyme A biosynthesis; CoA from (R)-pantothenate: step 1/5. This chain is Pantothenate kinase, found in Levilactobacillus brevis (strain ATCC 367 / BCRC 12310 / CIP 105137 / JCM 1170 / LMG 11437 / NCIMB 947 / NCTC 947) (Lactobacillus brevis).